The chain runs to 314 residues: uncharacterized protein (314 aa).

2 disordered regions span residues 170 to 203 (RSSM…NPDE) and 258 to 314 (VGES…PKKR). The segment covering 171–186 (SSMNSQSQMSESSFPT) has biased composition (low complexity). Residues 187 to 200 (PIDPPPRIPHPPLN) show a composition bias toward pro residues. Over residues 261–272 (SSRQGENTQNVH) the composition is skewed to polar residues. The span at 289–303 (RFKDDARKSNEDEHM) shows a compositional bias: basic and acidic residues.

This is an uncharacterized protein from Arabidopsis thaliana (Mouse-ear cress).